Reading from the N-terminus, the 1186-residue chain is DNA excision repair protein ERCC-5 (1186 aa).

Residues 1-78 are N-domain; that stretch reads MGVQGLWKLL…RIRPIFVFDG (78 aa). Lys-8 is subject to N6-acetyllysine. Asp-30 contacts Mg(2+). Residues 31–67 form a DNA-binding; may bind to the undamaged single-strand DNA of the DNA repair bubble region; that stretch reads ISIWLNQALKGVRDRHGNSIENPHLLTLFHRLCKLLF. Asp-77 lines the Mg(2+) pocket. The spacer region stretch occupies residues 79–785; it reads DAPLLKKQTL…LRLFGIPYIQ (707 aa). Disordered stretches follow at residues 306–342, 354–385, 404–473, 510–533, and 667–724; these read ESLP…PPSP, GSSS…SISP, CAGD…SVPK, HSDA…TNSV, and QAEF…AEDS. Residues 325 to 336 are compositionally biased toward basic and acidic residues; sequence PCEKLKTEKEPD. Residue Ser-384 is modified to Phosphoserine. Basic and acidic residues predominate over residues 454 to 472; sequence AEEHVASTNEGREPTDSVP. Ser-705 is subject to Phosphoserine. Residues 786 to 881 form an I-domain region; sequence APMEAEAQCA…VTAMEILNEF (96 aa). Mg(2+)-binding residues include Glu-789, Glu-791, Asp-810, and Asp-812. A DNA-binding; may bind to the undamaged single-strand DNA of the DNA repair bubble region spans residues 820–836; sequence HVYRNFFNKNKFVEYYQ. The segment at 848–880 is DNA-binding; H2TH (helix-2turn-helix) motif which binds double-stranded DNA; the sequence is RNKLINLAYLLGSDYTEGIPTVGCVTAMEILNE. Asp-861 contacts Mg(2+). The tract at residues 912–918 is DNA-binding; may bind double-stranded DNA; sequence TKVKKKL. The tract at residues 981 to 1009 is interaction with PCNA; it reads LKQLDAQQTQLRIDSFFRLAQQEKEDAKR. The segment at 1011 to 1186 is interaction with ERCC6/CSB; it reads KSQRLNRAVT…RRARGRKRKT (176 aa). Disordered stretches follow at residues 1056 to 1081 and 1095 to 1186; these read QKRG…SKGK and ESSD…KRKT. The short motif at 1057 to 1074 is the Nuclear localization signal 1 element; it reads KRGITNTLEESSSLKRKR. The segment covering 1124–1133 has biased composition (polar residues); the sequence is TSASDSQNSV. A Nuclear localization signal 2 motif is present at residues 1169–1186; the sequence is FGKKRRKLRRARGRKRKT. A compositionally biased stretch (basic residues) spans 1169–1186; that stretch reads FGKKRRKLRRARGRKRKT.

Belongs to the XPG/RAD2 endonuclease family. XPG subfamily. In terms of assembly, monomer. Homodimer. Component of the homologous recombination repair (HR) complex composed of ERCC5/XPG, BRCA2, PALB2, DSS1 and RAD51. Within the complex, interacts with BRCA2 and PALB2. Interacts with RNA polymerase II. Interacts (via C-terminus) with ERCC6/CSB; the interaction stimulates ERCC6/CSB binding to the DNA repair bubble and ERCC6/CSB ATPase activity. May form a complex composed of RNA polymerase II, ERCC6/CSB and ERCC5/XPG which associates with the DNA repair bubble during transcription-coupled nucleotide excision repair. Interacts with BRCA1; the interaction promotes the release of BRCA1 from DNA. Interacts with PCNA. Interacts with NTHL1; the interaction stimulates NTHL1 activity and NTHL1 binding to its DNA substrate. Requires Mg(2+) as cofactor.

Its subcellular location is the nucleus. It is found in the chromosome. Single-stranded structure-specific DNA endonuclease involved in DNA excision repair. Makes the 3'incision in DNA nucleotide excision repair (NER). Binds and bends DNA repair bubble substrate and breaks base stacking at the single-strand/double-strand DNA junction of the DNA bubble. Plays a role in base excision repair (BER) by promoting the binding of DNA glycosylase NTHL1 to its substrate and increasing NTHL1 catalytic activity that removes oxidized pyrimidines from DNA. Involved in transcription-coupled nucleotide excision repair (TCR) which allows RNA polymerase II-blocking lesions to be rapidly removed from the transcribed strand of active genes. Functions during the initial step of TCR in cooperation with ERCC6/CSB to recognized stalled RNA polymerase II. Also, stimulates ERCC6/CSB binding to the DNA repair bubble and ERCC6/CSB ATPase activity. Required for DNA replication fork maintenance and preservation of genomic stability. Involved in homologous recombination repair (HRR) induced by DNA replication stress by recruiting RAD51, BRCA2, and PALB2 to the damaged DNA site. In TFIIH stimulates the 5'-3' helicase activity of XPD/ERCC2 and the DNA translocase activity of XPB/ERCC3. During HRR, binds to the replication fork with high specificity and stabilizes it. Also, acts upstream of HRR, to promote the release of BRCA1 from DNA. The sequence is that of DNA excision repair protein ERCC-5 (ERCC5) from Homo sapiens (Human).